Reading from the N-terminus, the 488-residue chain is N-succinylglutamate 5-semialdehyde dehydrogenase (488 aa).

G221–G226 is an NAD(+) binding site. Active-site residues include E244 and C278.

This sequence belongs to the aldehyde dehydrogenase family. AstD subfamily.

It carries out the reaction N-succinyl-L-glutamate 5-semialdehyde + NAD(+) + H2O = N-succinyl-L-glutamate + NADH + 2 H(+). It participates in amino-acid degradation; L-arginine degradation via AST pathway; L-glutamate and succinate from L-arginine: step 4/5. Functionally, catalyzes the NAD-dependent reduction of succinylglutamate semialdehyde into succinylglutamate. This chain is N-succinylglutamate 5-semialdehyde dehydrogenase, found in Pseudomonas syringae pv. syringae (strain B728a).